We begin with the raw amino-acid sequence, 362 residues long: uncharacterized protein (362 aa).

The residue at position 2 (A2) is an N-acetylalanine.

The protein belongs to the Gfo/Idh/MocA family. In terms of assembly, homodimer.

This is an uncharacterized protein from Arabidopsis thaliana (Mouse-ear cress).